The sequence spans 108 residues: Ig kappa chain V region BS-5 (108 aa).

The tract at residues 1–23 (DVVMTQTPASVSEPVGGTVTIKC) is framework-1. 2 disulfide bridges follow: C23/C88 and C80/G108. Positions 24–34 (QASQSIYSNLA) are complementarity-determining-1. The framework-2 stretch occupies residues 35 to 49 (WYQZKPGQPPKLLIY). The segment at 50-56 (KASTLES) is complementarity-determining-2. The interval 57 to 88 (GVPSRFKGSGSGTDFTLTISDLECADAATYFC) is framework-3. The complementarity-determining-3 stretch occupies residues 89–97 (QGSBYTGTV). The interval 98–107 (FGGGTEVVVK) is framework-4.

This is Ig kappa chain V region BS-5 from Oryctolagus cuniculus (Rabbit).